A 549-amino-acid chain; its full sequence is MDYMKLGLKSRKTGIDVKQDIPKDEYSMENIDDFFKDDETSLISMRRKSRRKSSLFLPSTLNGDTKNVLPPFLQSYKSQDDEVVQSPSGKGDGSRRSSLLSHQSNFLSPANDFEPIEEEPEQEENDIRGNDFATPITQKLSKPTYKRKYSTRYSLDTSESPSVRLTPDRITNKNVYSDVPDLVADEDDDDRVNTSLNTSDNALLEDELEDDGFIPESEEDGDYIESDSSLDSGSDSASDSDGDNTYQEVEEEAEVNTNDNEDDYIRRQASDVVRTDSIIDRNGLRKSTRVKVAPLQYWRNEKIVYKRKSNKPVLDIDKIVTYDESEDEEEILAAQRRKKQKKKPTPTRPYNYVPTGRPRGRPKKDPNAKENLIPEDPNEDIIERIESGGIENGEWLKHGILEANVKISDTKEETKDEIIAFAPNLSQTEQVKDTKDENFALEIMFDKHKEYFASGILKLPAISGQKKLSNSFRTYITFHVIQGIVEVTVCKNKFLSVKGSTFQIPAFNEYAIANRGNDEAKMFFVQVTVSEDANDDNDKELDSTFDTFG.

The tract at residues 47–275 (RKSRRKSSLF…RRQASDVVRT (229 aa)) is disordered. 2 stretches are compositionally biased toward polar residues: residues 56 to 65 (FLPSTLNGDT) and 96 to 108 (RSSLLSHQSNFLS). Positions 114–124 (EPIEEEPEQEE) are enriched in acidic residues. Residues 151-163 (TRYSLDTSESPSV) are compositionally biased toward polar residues. Residues 203–225 (LLEDELEDDGFIPESEEDGDYIE) are compositionally biased toward acidic residues. A compositionally biased stretch (low complexity) spans 226–237 (SDSSLDSGSDSA). The span at 238–262 (SDSDGDNTYQEVEEEAEVNTNDNED) shows a compositional bias: acidic residues. The span at 263–275 (DYIRRQASDVVRT) shows a compositional bias: basic and acidic residues. S325 is modified (phosphoserine). The segment covering 335 to 345 (QRRKKQKKKPT) has biased composition (basic residues). The disordered stretch occupies residues 335–374 (QRRKKQKKKPTPTRPYNYVPTGRPRGRPKKDPNAKENLIP). Residues 356–364 (GRPRGRPKK) constitute a DNA-binding region (a.T hook).

It belongs to the CENP-C/MIF2 family. In terms of assembly, component of the inner kinetochore constitutive centromere-associated network (CCAN) (also known as central kinetochore CTF19 complex in yeast), which is composed of at least AME1, CHL4, CNN1, CTF3, CTF19, IML3, MCM16, MCM21, MCM22, MHF1, MHF2, MIF2, NKP1, NKP2, OKP1 and WIP1. Interacts with CBF1.

Its subcellular location is the nucleus. It localises to the chromosome. The protein localises to the centromere. It is found in the kinetochore. Functionally, component of the kinetochore, a multiprotein complex that assembles on centromeric DNA and attaches chromosomes to spindle microtubules, mediating chromosome segregation and sister chromatid segregation during meiosis and mitosis. Component of the inner kinetochore constitutive centromere-associated network (CCAN), which serves as a structural platform for outer kinetochore assembly. This chain is Inner kinetochore subunit MIF2 (MIF2), found in Saccharomyces cerevisiae (strain ATCC 204508 / S288c) (Baker's yeast).